The following is a 267-amino-acid chain: 2-dehydro-3-deoxyphosphooctonate aldolase (267 aa).

Belongs to the KdsA family.

It localises to the cytoplasm. It carries out the reaction D-arabinose 5-phosphate + phosphoenolpyruvate + H2O = 3-deoxy-alpha-D-manno-2-octulosonate-8-phosphate + phosphate. It participates in carbohydrate biosynthesis; 3-deoxy-D-manno-octulosonate biosynthesis; 3-deoxy-D-manno-octulosonate from D-ribulose 5-phosphate: step 2/3. It functions in the pathway bacterial outer membrane biogenesis; lipopolysaccharide biosynthesis. In Campylobacter jejuni subsp. doylei (strain ATCC BAA-1458 / RM4099 / 269.97), this protein is 2-dehydro-3-deoxyphosphooctonate aldolase.